We begin with the raw amino-acid sequence, 1286 residues long: DNA-directed RNA polymerase 147 kDa polypeptide (1286 aa).

Belongs to the poxviridae DNA-directed RNA polymerase 147 kDa subunit family. In terms of assembly, the DNA-dependent RNA polymerase used for intermediate and late genes expression consists of eight subunits Rpo30/OPG66, Rpo7/OPG90, Rpo22/OPG103, Rpo147/OPG105, Rpo18/OPG119, Rpo19/OPG131, Rpo132/OPG151 and Rpo35/OPG156. The same holoenzyme, with the addition of the transcription-specificity factor OPG109, is used for early gene expression.

The protein resides in the virion. The enzyme catalyses RNA(n) + a ribonucleoside 5'-triphosphate = RNA(n+1) + diphosphate. Part of the DNA-dependent RNA polymerase which catalyzes the transcription of viral DNA into RNA using the four ribonucleoside triphosphates as substrates. Responsible for the transcription of early, intermediate and late genes. DNA-dependent RNA polymerase associates with the early transcription factor (ETF), itself composed of OPG118 and OPG133, thereby allowing the early genes transcription. Late transcription, and probably also intermediate transcription, require newly synthesized RNA polymerase. The chain is DNA-directed RNA polymerase 147 kDa polypeptide (OPG105) from Variola virus (isolate Human/India/Ind3/1967) (VARV).